A 79-amino-acid chain; its full sequence is Short neurotoxin 3 (79 aa).

Positions Met-1–Thr-23 are cleaved as a signal peptide. Cystine bridges form between Cys-24–Cys-41, Cys-34–Cys-59, Cys-63–Cys-71, and Cys-72–Cys-77.

The protein belongs to the three-finger toxin family. Short-chain subfamily. As to expression, expressed by the venom gland.

Its subcellular location is the secreted. In Oxyuranus scutellatus scutellatus (Australian taipan), this protein is Short neurotoxin 3.